A 398-amino-acid chain; its full sequence is tRNA N6-adenosine threonylcarbamoyltransferase (398 aa).

3 residues coordinate a divalent metal cation: His-162, His-166, and Tyr-183. Substrate contacts are provided by residues 183 to 187 (YVSGG), Asp-215, Gly-230, Glu-234, and Asn-329. Residue Asp-357 participates in a divalent metal cation binding.

This sequence belongs to the KAE1 / TsaD family. As to quaternary structure, component of the EKC/KEOPS complex composed of at least BUD32, CGI121, GON7, KAE1 and PCC1; the whole complex dimerizes. It depends on a divalent metal cation as a cofactor.

It is found in the cytoplasm. The protein localises to the nucleus. The enzyme catalyses L-threonylcarbamoyladenylate + adenosine(37) in tRNA = N(6)-L-threonylcarbamoyladenosine(37) in tRNA + AMP + H(+). Its function is as follows. Component of the EKC/KEOPS complex that is required for the formation of a threonylcarbamoyl group on adenosine at position 37 (t(6)A37) in tRNAs that read codons beginning with adenine. The complex is probably involved in the transfer of the threonylcarbamoyl moiety of threonylcarbamoyl-AMP (TC-AMP) to the N6 group of A37. KAE1 likely plays a direct catalytic role in this reaction, but requires other protein(s) of the complex to fulfill this activity. The EKC/KEOPS complex also promotes both telomere uncapping and telomere elongation. The complex is required for efficient recruitment of transcriptional coactivators. This chain is tRNA N6-adenosine threonylcarbamoyltransferase, found in Cryptococcus neoformans var. neoformans serotype D (strain B-3501A) (Filobasidiella neoformans).